We begin with the raw amino-acid sequence, 275 residues long: Large ribosomal subunit protein uL2c (275 aa).

Residues 225 to 256 are disordered; sequence AMNAVDHPHGGGEGRSPIGRSQPSTPWGRPAL.

This sequence belongs to the universal ribosomal protein uL2 family. Part of the 50S ribosomal subunit.

It is found in the plastid. It localises to the chloroplast. In Cyanidium caldarium (Red alga), this protein is Large ribosomal subunit protein uL2c (rpl2).